The primary structure comprises 239 residues: Probable transcriptional regulatory protein MG332 (239 aa).

Belongs to the TACO1 family.

It is found in the cytoplasm. This is Probable transcriptional regulatory protein MG332 from Mycoplasma genitalium (strain ATCC 33530 / DSM 19775 / NCTC 10195 / G37) (Mycoplasmoides genitalium).